The sequence spans 130 residues: Ribonuclease P protein component (130 aa).

This sequence belongs to the RnpA family. As to quaternary structure, consists of a catalytic RNA component (M1 or rnpB) and a protein subunit.

It catalyses the reaction Endonucleolytic cleavage of RNA, removing 5'-extranucleotides from tRNA precursor.. RNaseP catalyzes the removal of the 5'-leader sequence from pre-tRNA to produce the mature 5'-terminus. It can also cleave other RNA substrates such as 4.5S RNA. The protein component plays an auxiliary but essential role in vivo by binding to the 5'-leader sequence and broadening the substrate specificity of the ribozyme. This chain is Ribonuclease P protein component, found in Psychrobacter sp. (strain PRwf-1).